Reading from the N-terminus, the 167-residue chain is Ubiquitin-fold modifier-conjugating enzyme 1 (167 aa).

The Glycyl thioester intermediate role is filled by Cys-116.

It belongs to the ubiquitin-conjugating enzyme family. UFC1 subfamily. Interacts with UBA5 (via C-terminus). Interacts with UFL1. Interacts with UFM1.

Functionally, E2-like enzyme which specifically catalyzes the second step in ufmylation. Accepts the ubiquitin-like modifier UFM1 from the E1 enzyme UBA5 and forms an intermediate with UFM1 via a thioester linkage. Ufmylation is involved in various processes, such as ribosome recycling, response to DNA damage, interferon response or reticulophagy (also called ER-phagy). The sequence is that of Ubiquitin-fold modifier-conjugating enzyme 1 from Esox lucius (Northern pike).